A 320-amino-acid chain; its full sequence is ATP-dependent 6-phosphofructokinase (320 aa).

Glycine 12 contacts ATP. Arginine 22–arginine 26 is a binding site for ADP. ATP is bound by residues arginine 73–phenylalanine 74 and glycine 103–serine 106. Aspartate 104 is a Mg(2+) binding site. Threonine 126 to aspartate 128 provides a ligand contact to substrate. Aspartate 128 acts as the Proton acceptor in catalysis. Arginine 155 contacts ADP. Residues arginine 163 and methionine 170 to arginine 172 contribute to the substrate site. Residues glycine 186–glutamate 188, lysine 212, and lysine 214–histidine 216 contribute to the ADP site. Substrate-binding positions include glutamate 223, arginine 244, and histidine 250–arginine 253.

Belongs to the phosphofructokinase type A (PFKA) family. ATP-dependent PFK group I subfamily. Prokaryotic clade 'B1' sub-subfamily. As to quaternary structure, homotetramer. The cofactor is Mg(2+).

It is found in the cytoplasm. It catalyses the reaction beta-D-fructose 6-phosphate + ATP = beta-D-fructose 1,6-bisphosphate + ADP + H(+). It participates in carbohydrate degradation; glycolysis; D-glyceraldehyde 3-phosphate and glycerone phosphate from D-glucose: step 3/4. Its activity is regulated as follows. Allosterically activated by ADP and other diphosphonucleosides, and allosterically inhibited by phosphoenolpyruvate. Its function is as follows. Catalyzes the phosphorylation of D-fructose 6-phosphate to fructose 1,6-bisphosphate by ATP, the first committing step of glycolysis. This Vibrio campbellii (strain ATCC BAA-1116) protein is ATP-dependent 6-phosphofructokinase.